The primary structure comprises 360 residues: UDP-N-acetylglucosamine--N-acetylmuramyl-(pentapeptide) pyrophosphoryl-undecaprenol N-acetylglucosamine transferase (360 aa).

UDP-N-acetyl-alpha-D-glucosamine is bound by residues 13-15 (TGG), N125, R164, S191, and Q290.

This sequence belongs to the glycosyltransferase 28 family. MurG subfamily.

It is found in the cell inner membrane. It catalyses the reaction di-trans,octa-cis-undecaprenyl diphospho-N-acetyl-alpha-D-muramoyl-L-alanyl-D-glutamyl-meso-2,6-diaminopimeloyl-D-alanyl-D-alanine + UDP-N-acetyl-alpha-D-glucosamine = di-trans,octa-cis-undecaprenyl diphospho-[N-acetyl-alpha-D-glucosaminyl-(1-&gt;4)]-N-acetyl-alpha-D-muramoyl-L-alanyl-D-glutamyl-meso-2,6-diaminopimeloyl-D-alanyl-D-alanine + UDP + H(+). It participates in cell wall biogenesis; peptidoglycan biosynthesis. Its function is as follows. Cell wall formation. Catalyzes the transfer of a GlcNAc subunit on undecaprenyl-pyrophosphoryl-MurNAc-pentapeptide (lipid intermediate I) to form undecaprenyl-pyrophosphoryl-MurNAc-(pentapeptide)GlcNAc (lipid intermediate II). This Hahella chejuensis (strain KCTC 2396) protein is UDP-N-acetylglucosamine--N-acetylmuramyl-(pentapeptide) pyrophosphoryl-undecaprenol N-acetylglucosamine transferase.